The primary structure comprises 476 residues: Adenosylhomocysteinase (476 aa).

Substrate contacts are provided by T67, D142, and E202. An NAD(+)-binding site is contributed by 203 to 205; sequence TTT. The substrate site is built by K232 and D236. NAD(+)-binding positions include N237, 266-271, E289, N324, 345-347, and N390; these read GYGDVG and IGH.

The protein belongs to the adenosylhomocysteinase family. NAD(+) is required as a cofactor.

It localises to the cytoplasm. It catalyses the reaction S-adenosyl-L-homocysteine + H2O = L-homocysteine + adenosine. It participates in amino-acid biosynthesis; L-homocysteine biosynthesis; L-homocysteine from S-adenosyl-L-homocysteine: step 1/1. Functionally, may play a key role in the regulation of the intracellular concentration of adenosylhomocysteine. The chain is Adenosylhomocysteinase from Synechococcus sp. (strain CC9605).